Reading from the N-terminus, the 298-residue chain is Probable D,D-dipeptide transport system permease protein DdpC (298 aa).

At 1–33 (MMLSEETSAVRPQKQTRFNGAKLVWMLKGSPLT) the chain is on the cytoplasmic side. The helical transmembrane segment at 34 to 54 (VTSAVIIVLMLLMMIFSPWLA) threads the bilayer. Over 55 to 96 (THDPNAIDLTARLLPPSAAHWFGTDEVGRDLFSRVLVGSQQS) the chain is Periplasmic. A helical transmembrane segment spans residues 97 to 117 (ILAGLVVVAIAGMIGSLLGCL). Residues 97 to 282 (ILAGLVVVAI…LTAVGFNLFG (186 aa)) form the ABC transmembrane type-1 domain. Residues 118 to 124 (SGVLGGR) are Cytoplasmic-facing. 2 helical membrane passes run 125–145 (ADAIIMRIMDIMLSIPSLVLT) and 146–166 (MALAAALGPSLFNAMLAIAIV). The Cytoplasmic segment spans residues 167 to 217 (RIPFYVRLARGQALVVRQYTYVQAAKTFGASRWHLINWHILRNSLPPLIVQ). Residues 218-238 (ASLDIGSAILMAATLGFIGLG) traverse the membrane as a helical segment. Residues 239–260 (AQQPSAEWGAMVANGRNYVLDQ) are Periplasmic-facing. Residues 261–281 (WWYCAFPGAAILLTAVGFNLF) traverse the membrane as a helical segment. Residues 282-298 (GDGIRDLLDPKAGGKQS) lie on the Cytoplasmic side of the membrane.

It belongs to the binding-protein-dependent transport system permease family. OppBC subfamily. As to quaternary structure, the complex is composed of two ATP-binding proteins (DdpD and DdpF), two transmembrane proteins (DdpB and DdpC) and a solute-binding protein (DdpA).

It is found in the cell inner membrane. In terms of biological role, part of the ABC transporter complex DdpABCDF, which is probably involved in D,D-dipeptide transport. Probably responsible for the translocation of the substrate across the membrane. The chain is Probable D,D-dipeptide transport system permease protein DdpC (ddpC) from Escherichia coli (strain K12).